The sequence spans 879 residues: Putative ankyrin repeat protein L88 (879 aa).

ANK repeat units follow at residues Lys-22 to Lys-62, Lys-63 to Ile-96, Glu-100 to Ala-133, Asn-137 to Asp-170, Asn-174 to Ala-207, Asn-211 to Ala-241, Lys-245 to Ala-278, Lys-282 to Thr-313, Arg-317 to His-347, Glu-351 to Asn-384, Ser-387 to Ile-420, Asn-424 to Phe-463, Asn-470 to Ser-499, Ser-506 to Ile-542, Asn-546 to Thr-578, Ser-674 to Ile-704, and Lys-708 to Ile-738.

In Acanthamoeba polyphaga mimivirus (APMV), this protein is Putative ankyrin repeat protein L88.